A 287-amino-acid chain; its full sequence is MDWTMISGSRDESLHAARDYWRRLNESECFDIEGIEAPPGAIALIPYDCQLPNSFHPLPLWVKLYASAGLHRFNMLEVLVNERSVGKLNIIVPIARPKGVTTNERFIPCDCFSVDDKLPQWPSHDSFNDRKRFYSVKESELQNNDWINLYLELVLCAIQKVRISDSDLSKLKIVKAVIETKEDMVPPNERLNAKTAVVYITFKGLANARIAAGEHYERKAIIRRIFNEHTGHLSLLGDLIGEKKFVNIDPVTYFNSPAYLEDITHELPPESPWMDILAGTGSMDQID.

It belongs to the UPF0725 (EMB2204) family.

This Arabidopsis thaliana (Mouse-ear cress) protein is UPF0725 protein At1g19060.